Reading from the N-terminus, the 150-residue chain is Ribosome maturation factor RimP (150 aa).

Belongs to the RimP family.

The protein resides in the cytoplasm. In terms of biological role, required for maturation of 30S ribosomal subunits. This chain is Ribosome maturation factor RimP, found in Thermotoga neapolitana (strain ATCC 49049 / DSM 4359 / NBRC 107923 / NS-E).